The chain runs to 182 residues: UPF0690 protein C1orf52 (182 aa).

Disordered stretches follow at residues 1–67 and 100–182; these read MAAE…RSVT and WKSN…KKKK. Residues 23-32 show a composition bias toward acidic residues; that stretch reads SDEEDNIEPE. Positions 50–63 are enriched in basic and acidic residues; sequence NKAEKRLPGPDELF. Position 67 is a phosphothreonine (Thr-67). The residue at position 132 (Tyr-132) is a Phosphotyrosine. The span at 151–162 shows a compositional bias: acidic residues; that stretch reads EGEETLESDDEK. Ser-158 carries the phosphoserine modification. Positions 172 to 182 are enriched in basic and acidic residues; it reads VEPGEPAKKKK.

Belongs to the UPF0690 family. As to expression, expressed in all tissues tested including heart, placenta, liver, skeletal muscle, kidney and pancreas. Weak expression in brain and lung.

This Homo sapiens (Human) protein is UPF0690 protein C1orf52 (C1orf52).